The sequence spans 279 residues: Methylthioribulose-1-phosphate dehydratase (279 aa).

A substrate-binding site is contributed by cysteine 132. Zn(2+) contacts are provided by histidine 150 and histidine 152. Glutamate 175 functions as the Proton donor/acceptor in the catalytic mechanism. Histidine 240 lines the Zn(2+) pocket.

This sequence belongs to the aldolase class II family. MtnB subfamily. It depends on Zn(2+) as a cofactor.

The protein localises to the cytoplasm. It catalyses the reaction 5-(methylsulfanyl)-D-ribulose 1-phosphate = 5-methylsulfanyl-2,3-dioxopentyl phosphate + H2O. It participates in amino-acid biosynthesis; L-methionine biosynthesis via salvage pathway; L-methionine from S-methyl-5-thio-alpha-D-ribose 1-phosphate: step 2/6. Its function is as follows. Catalyzes the dehydration of methylthioribulose-1-phosphate (MTRu-1-P) into 2,3-diketo-5-methylthiopentyl-1-phosphate (DK-MTP-1-P). This is Methylthioribulose-1-phosphate dehydratase from Candida tropicalis (strain ATCC MYA-3404 / T1) (Yeast).